The following is a 421-amino-acid chain: Phosphoribosylamine--glycine ligase (421 aa).

The 207-residue stretch at 108-314 (KEIMVKYNVP…FAQNIDDIMM (207 aa)) folds into the ATP-grasp domain. An ATP-binding site is contributed by 134–195 (IEEQGAPIVV…EEFLDGEEFS (62 aa)). 2 residues coordinate Mg(2+): glutamate 284 and asparagine 286.

The protein belongs to the GARS family. Requires Mg(2+) as cofactor. The cofactor is Mn(2+).

It catalyses the reaction 5-phospho-beta-D-ribosylamine + glycine + ATP = N(1)-(5-phospho-beta-D-ribosyl)glycinamide + ADP + phosphate + H(+). It participates in purine metabolism; IMP biosynthesis via de novo pathway; N(1)-(5-phospho-D-ribosyl)glycinamide from 5-phospho-alpha-D-ribose 1-diphosphate: step 2/2. The sequence is that of Phosphoribosylamine--glycine ligase from Streptococcus pyogenes serotype M6 (strain ATCC BAA-946 / MGAS10394).